The primary structure comprises 202 residues: Josephin-1 (202 aa).

Position 15 is a phosphoserine (serine 15). A Josephin domain is found at 23–202; the sequence is PPQIYHEKQR…EAHQSWRADV (180 aa). The Nucleophile role is filled by cysteine 36. Residue histidine 139 is the Proton acceptor of the active site.

Interacts with beta-actin/ACTB. In terms of processing, monoubiquitinated. Ubiquitination activates deubiquitination activity in vitro.

The protein resides in the cell membrane. It is found in the cytoplasm. It catalyses the reaction Thiol-dependent hydrolysis of ester, thioester, amide, peptide and isopeptide bonds formed by the C-terminal Gly of ubiquitin (a 76-residue protein attached to proteins as an intracellular targeting signal).. Its function is as follows. Deubiquitinates monoubiquitinated probes (in vitro). When ubiquitinated, cleaves 'Lys-63'-linked and 'Lys-48'-linked poly-ubiquitin chains (in vitro), hence may act as a deubiquitinating enzyme. May increase macropinocytosis and suppress clathrin- and caveolae-mediated endocytosis. May enhance membrane dynamics and cell motility independently of its catalytic activity. The protein is Josephin-1 (JOSD1) of Bos taurus (Bovine).